The following is a 400-amino-acid chain: MKEKTIIIVGGGQAAAMAAASLRQQGFTGELHLFSDERHLPYERPPLSKSMLLEDSPQLQQVLPANWWQENNVHLHSGVTIKTLGRDTRELVLTNGESWHWDQLFIATGAAARPLPLLDALGERCFTLRHAGDAARLREVLQPERSVVIIGAGTIGLELAASATQRRCKVTVIELAATVMGRNAPPPVQRYLLQRHQQAGVRILLNNAIEHVVDGEKVELTLQSGETLQADVVIYGIGISANEQLAREANLDTANGIVIDEACRTCDPAIFAGGDVAITRLDNGALHRCESWENANNQAQIAAAAMLGLPLPLLPPPWFWSDQYSDNLQFIGDMRGDDWLCRGNPETQKAIWFNLQNGVLIGAVTLNQGREIRPIRKWIQSGKTFDAKLLIDENIALKSL.

5–36 (TIIIVGGGQAAAMAAASLRQQGFTGELHLFSD) is an FAD binding site. Residue 146–174 (SVVIIGAGTIGLELAASATQRRCKVTVIE) participates in NAD(+) binding.

It belongs to the bacterial ring-hydroxylating dioxygenase ferredoxin reductase family. In terms of assembly, this dioxygenase system consists of four proteins: the two subunits of the hydroxylase component (HcaE and HcaF), a ferredoxin (HcaC) and a ferredoxin reductase (HcaD). FAD serves as cofactor.

The catalysed reaction is 2 reduced [2Fe-2S]-[ferredoxin] + NAD(+) + H(+) = 2 oxidized [2Fe-2S]-[ferredoxin] + NADH. The protein operates within aromatic compound metabolism; 3-phenylpropanoate degradation. Functionally, part of the multicomponent 3-phenylpropionate dioxygenase, that converts 3-phenylpropionic acid (PP) and cinnamic acid (CI) into 3-phenylpropionate-dihydrodiol (PP-dihydrodiol) and cinnamic acid-dihydrodiol (CI-dihydrodiol), respectively. This is 3-phenylpropionate/cinnamic acid dioxygenase ferredoxin--NAD(+) reductase component from Escherichia coli (strain K12 / MC4100 / BW2952).